A 348-amino-acid polypeptide reads, in one-letter code: Maintenance of mitochondrial morphology protein 1 (348 aa).

Residues 1–35 lie on the Lumenal side of the membrane; it reads MAGKADLGHTGISDNIVERQIFVPQPNNAWSFTQG. A helical membrane pass occupies residues 36–56; it reads LMCGQASVVVVLLVFIKFFVF. Topologically, residues 57 to 348 are cytoplasmic; it reads SEAPPSSGAA…GKTEKVNGNE (292 aa). In terms of domain architecture, SMP-LTD spans 114–323; it reads NPESLDWFNV…EPKFQVVRLP (210 aa). The interval 328-348 is disordered; that stretch reads RSKNTREPVGAGKTEKVNGNE.

Belongs to the MMM1 family. As to quaternary structure, homodimer. Component of the ER-mitochondria encounter structure (ERMES) or MDM complex, composed of MMM1, MDM10, MDM12 and MDM34. An MMM1 homodimer associates with one molecule of MDM12 on each side in a pairwise head-to-tail manner, and the SMP-LTD domains of MMM1 and MDM12 generate a continuous hydrophobic tunnel for phospholipid trafficking.

The protein resides in the endoplasmic reticulum membrane. Its function is as follows. Component of the ERMES/MDM complex, which serves as a molecular tether to connect the endoplasmic reticulum (ER) and mitochondria. Components of this complex are involved in the control of mitochondrial shape and protein biogenesis, and function in nonvesicular lipid trafficking between the ER and mitochondria. The MDM12-MMM1 subcomplex functions in the major beta-barrel assembly pathway that is responsible for biogenesis of all outer membrane beta-barrel proteins, and acts in a late step after the SAM complex. The MDM10-MDM12-MMM1 subcomplex further acts in the TOM40-specific pathway after the action of the MDM12-MMM1 complex. Essential for establishing and maintaining the structure of mitochondria and maintenance of mtDNA nucleoids. This is Maintenance of mitochondrial morphology protein 1 from Clavispora lusitaniae (strain ATCC 42720) (Yeast).